A 152-amino-acid polypeptide reads, in one-letter code: MVNEHKAHASFMFKIINVFVSFGFNLILGILIYDIFFNIDENLVVACILIAMPIIAFLILILTGGVHKELTYLQIYDKYKLMCEFIREITISTITSELATIATMILYQLQNPIKTITFLLLLIAFLAFGLIFTKLLIDAYFITLKKLKSLKE.

3 consecutive transmembrane segments (helical) span residues isoleucine 15 to isoleucine 35, leucine 43 to threonine 63, and threonine 117 to isoleucine 137.

It to M.jannaschii MJ0129 and MJ0587.

The protein localises to the cell membrane. This is an uncharacterized protein from Methanocaldococcus jannaschii (strain ATCC 43067 / DSM 2661 / JAL-1 / JCM 10045 / NBRC 100440) (Methanococcus jannaschii).